The chain runs to 413 residues: Sporulation-specific protein 74 (413 aa).

Positions 1 to 87 (MGAGTLLNGL…SEHTDDFNDG (87 aa)) are disordered. The segment covering 69–83 (HENKDIHERSEHTDD) has biased composition (basic and acidic residues).

In terms of assembly, interacts with itself. Interacts with MPC54, NUD1 and SPO21/MPC70.

Its subcellular location is the cytoplasm. It localises to the cytoskeleton. The protein localises to the microtubule organizing center. The protein resides in the spindle pole body. In terms of biological role, involved in the pathway that organizes the shaping and sizing of the prospore membrane (PSM) during sporulation. Probable component of a core structural unit of the scaffold that initiates synthesis of the prospore membrane. This chain is Sporulation-specific protein 74 (SPO74), found in Saccharomyces cerevisiae (strain ATCC 204508 / S288c) (Baker's yeast).